The following is a 273-amino-acid chain: Probable membrane transporter protein YunE (273 aa).

Helical transmembrane passes span 3 to 23, 50 to 70, 81 to 101, 105 to 125, 157 to 177, 185 to 205, 222 to 242, and 251 to 271; these read FVIL…IGLG, AIGT…LAYI, LIFF…SKLF, SFSV…MLKA, VGIA…IGGG, MLLF…IIFL, WLYA…GAAI, and IVMI…YEGI.

It belongs to the 4-toluene sulfonate uptake permease (TSUP) (TC 2.A.102) family.

Its subcellular location is the cell membrane. The chain is Probable membrane transporter protein YunE (yunE) from Bacillus subtilis (strain 168).